A 424-amino-acid chain; its full sequence is UPF0229 protein PFL_5654 (424 aa).

Residues 85–108 (GEHIARPQGGGGGGGGRGKAGNSG) are disordered. Positions 92–108 (QGGGGGGGGRGKAGNSG) are enriched in gly residues.

It belongs to the UPF0229 family.

The chain is UPF0229 protein PFL_5654 from Pseudomonas fluorescens (strain ATCC BAA-477 / NRRL B-23932 / Pf-5).